Reading from the N-terminus, the 357-residue chain is Cytochrome c peroxidase, mitochondrial (357 aa).

The transit peptide at 1–23 directs the protein to the mitochondrion; sequence MSATALRIAPIASRTFQRRLGYL. Histidine 116 (proton acceptor) is an active-site residue. The segment at 189 to 212 is disordered; that stretch reads PWRSGRTDLPEDMTPDNGRLPDGD. Histidine 239 contacts heme b. Tryptophan 255 acts as the Tryptophan radical intermediate in catalysis.

This sequence belongs to the peroxidase family. Cytochrome c peroxidase subfamily. In terms of assembly, forms a one-to-one complex with cytochrome c. The cofactor is heme b.

Its subcellular location is the mitochondrion matrix. The protein resides in the mitochondrion intermembrane space. The enzyme catalyses 2 Fe(II)-[cytochrome c] + H2O2 + 2 H(+) = 2 Fe(III)-[cytochrome c] + 2 H2O. Functionally, destroys radicals which are normally produced within the cells and which are toxic to biological systems. This chain is Cytochrome c peroxidase, mitochondrial, found in Candida glabrata (strain ATCC 2001 / BCRC 20586 / JCM 3761 / NBRC 0622 / NRRL Y-65 / CBS 138) (Yeast).